A 61-amino-acid polypeptide reads, in one-letter code: Large ribosomal subunit protein uL30 (61 aa).

Belongs to the universal ribosomal protein uL30 family. In terms of assembly, part of the 50S ribosomal subunit.

This chain is Large ribosomal subunit protein uL30, found in Corynebacterium jeikeium (strain K411).